Reading from the N-terminus, the 375-residue chain is Tyrosine--tRNA ligase (375 aa).

The L-tyrosine site is built by Y37, Y168, Q172, D175, and Q190. A 'KMSKS' region motif is present at residues K251 to S255. K254 provides a ligand contact to ATP.

The protein belongs to the class-I aminoacyl-tRNA synthetase family. TyrS type 4 subfamily. Homodimer.

The protein localises to the cytoplasm. The enzyme catalyses tRNA(Tyr) + L-tyrosine + ATP = L-tyrosyl-tRNA(Tyr) + AMP + diphosphate + H(+). Functionally, catalyzes the attachment of tyrosine to tRNA(Tyr) in a two-step reaction: tyrosine is first activated by ATP to form Tyr-AMP and then transferred to the acceptor end of tRNA(Tyr). This is Tyrosine--tRNA ligase from Thermococcus gammatolerans (strain DSM 15229 / JCM 11827 / EJ3).